Consider the following 86-residue polypeptide: Putative membrane protein insertion efficiency factor (86 aa).

The protein belongs to the UPF0161 family.

Its subcellular location is the cell inner membrane. In terms of biological role, could be involved in insertion of integral membrane proteins into the membrane. The protein is Putative membrane protein insertion efficiency factor of Ruegeria sp. (strain TM1040) (Silicibacter sp.).